Reading from the N-terminus, the 608-residue chain is 1-phosphatidylinositol 4,5-bisphosphate phosphodiesterase zeta-1 (608 aa).

An EF-hand domain is found at 35–70 (CSYIHVKQIFKDNDRLKQGRITIEEFRAIYRIITHR). One can recognise a PI-PLC X-box domain in the interval 155–299 (QDMTHPLNDY…LKFKILVKNK (145 aa)). Residues His170 and His215 contribute to the active site. The tract at residues 305–324 (KETHERKGSDKRGDNQDKET) is disordered. The 117-residue stretch at 349-465 (LSDLVIYTKA…GYILKPHFLR (117 aa)) folds into the PI-PLC Y-box domain. The region spanning 465–589 (RESKSYFNPS…KGYRRIPLFS (125 aa)) is the C2 domain.

As to quaternary structure, interacts via its C2 domain with PtdIns(3)P and, to a lesser extent, PtdIns(5)P in vitro. Requires Ca(2+) as cofactor. As to expression, expressed specifically in testis and sperm. Weakly expressed in pancreatic-duct cells. Up-regulated in pancreatic-duct cells from patients with cystic fibrosis.

Its subcellular location is the nucleus. The protein localises to the cytoplasm. It is found in the perinuclear region. It carries out the reaction a 1,2-diacyl-sn-glycero-3-phospho-(1D-myo-inositol-4,5-bisphosphate) + H2O = 1D-myo-inositol 1,4,5-trisphosphate + a 1,2-diacyl-sn-glycerol + H(+). Functionally, the production of the second messenger molecules diacylglycerol (DAG) and inositol 1,4,5-trisphosphate (IP3) is mediated by activated phosphatidylinositol-specific phospholipase C enzymes. In vitro, hydrolyzes PtdIns(4,5)P2 in a Ca(2+)-dependent manner. Triggers intracellular Ca(2+) oscillations in oocytes solely during M phase and is involved in inducing oocyte activation and initiating embryonic development up to the blastocyst stage. Is therefore a strong candidate for the egg-activating soluble sperm factor that is transferred from the sperm into the egg cytoplasm following gamete membrane fusion. May exert an inhibitory effect on phospholipase-C-coupled processes that depend on calcium ions and protein kinase C, including CFTR trafficking and function. This Homo sapiens (Human) protein is 1-phosphatidylinositol 4,5-bisphosphate phosphodiesterase zeta-1.